We begin with the raw amino-acid sequence, 59 residues long: Large ribosomal subunit protein bL32 (59 aa).

Residues 1-40 form a disordered region; that stretch reads MAVQQNKKSPSKRGMHRSHDFLRTTPLSVDPGTGEVHLRH.

Belongs to the bacterial ribosomal protein bL32 family.

This is Large ribosomal subunit protein bL32 from Nitrosospira multiformis (strain ATCC 25196 / NCIMB 11849 / C 71).